The chain runs to 216 residues: Probable RNA 2'-phosphotransferase 2 (216 aa).

It belongs to the KptA/TPT1 family.

Its function is as follows. Removes the 2'-phosphate from RNA via an intermediate in which the phosphate is ADP-ribosylated by NAD followed by a presumed transesterification to release the RNA and generate ADP-ribose 1''-2''-cyclic phosphate (APPR&gt;P). May function as an ADP-ribosylase. In Archaeoglobus fulgidus (strain ATCC 49558 / DSM 4304 / JCM 9628 / NBRC 100126 / VC-16), this protein is Probable RNA 2'-phosphotransferase 2 (kptA2).